A 79-amino-acid chain; its full sequence is Sec-independent protein translocase protein TatA (79 aa).

Residues 1 to 21 (MGSLSIWHWIVVIAVVLLLFG) traverse the membrane as a helical segment. Residues 42 to 60 (GLQDDEKTAEKPDAVKSLD) show a composition bias toward basic and acidic residues. The segment at 42-79 (GLQDDEKTAEKPDAVKSLDHNATTGTPPNRTDVGSKAV) is disordered. The span at 61 to 70 (HNATTGTPPN) shows a compositional bias: polar residues.

This sequence belongs to the TatA/E family. In terms of assembly, the Tat system comprises two distinct complexes: a TatABC complex, containing multiple copies of TatA, TatB and TatC subunits, and a separate TatA complex, containing only TatA subunits. Substrates initially bind to the TatABC complex, which probably triggers association of the separate TatA complex to form the active translocon.

It localises to the cell inner membrane. Functionally, part of the twin-arginine translocation (Tat) system that transports large folded proteins containing a characteristic twin-arginine motif in their signal peptide across membranes. TatA could form the protein-conducting channel of the Tat system. The sequence is that of Sec-independent protein translocase protein TatA from Rhodopseudomonas palustris (strain HaA2).